A 509-amino-acid polypeptide reads, in one-letter code: Bestrophin-2a (509 aa).

The Cytoplasmic segment spans residues 1–31 (MTVTYTARVANARFGGFSQLLLLWRGSIYKL). Position 10 (A10) interacts with Ca(2+). Residues 32-51 (LWRELLCFLGFYMALSAAYR) form a helical membrane-spanning segment. Topologically, residues 52–60 (FVLTEGQKR) are extracellular. The helical transmembrane segment at 61 to 82 (YFEKLVIYCDQYASLIPVSFVL) threads the bilayer. Residues 83–238 (GFYVTLVVNR…WISVPLVYTQ (156 aa)) lie on the Cytoplasmic side of the membrane. The helical transmembrane segment at 239–255 (VVTIALYSYFLACLIGR) threads the bilayer. The Extracellular segment spans residues 256 to 274 (QFLDPAQGYKDHDLDLCVP). Residues 275-288 (IFTLLQFFFYAGWL) form a helical membrane-spanning segment. The Cytoplasmic segment spans residues 289 to 509 (KVAEQLINPF…PIGEEEENLA (221 aa)). 4 residues coordinate Ca(2+): Q293, N296, D301, and D304. The segment at 454–509 (DPGLPEPEAPPPAGPEPLTLIPGPVEPFSIVTMPGPRGPAPPWLPSPIGEEEENLA) is disordered. 2 stretches are compositionally biased toward pro residues: residues 457 to 468 (LPEPEAPPPAGP) and 489 to 498 (PRGPAPPWLP).

Belongs to the anion channel-forming bestrophin (TC 1.A.46) family. Calcium-sensitive chloride channel subfamily. As to quaternary structure, pentamer. Interacts with GLUL; this interaction tethers a fraction of GLUL to the membrane, causing a decrease of cytosolic glutamine synthase (GS) activity and inhibits the chloride channel activity of BEST2 by affecting the gating at the aperture in the absence of intracellular glutamate. In terms of tissue distribution, mainly confined to the retinal pigment epithelium. Expressed in colon.

Its subcellular location is the cell membrane. The protein localises to the basolateral cell membrane. It carries out the reaction chloride(in) = chloride(out). The enzyme catalyses hydrogencarbonate(in) = hydrogencarbonate(out). The catalysed reaction is L-glutamate(out) = L-glutamate(in). It catalyses the reaction iodide(out) = iodide(in). It carries out the reaction L-glutamine(out) = L-glutamine(in). Its activity is regulated as follows. Chloride channel activity is allosterically inhibited by GLUL/glutamine synthase (GS) which affects the gating at the aperture in the absence of intracellular glutamate. Inhibitory effect of GLUL is relieved upon increasing of L-glutamate intracellular level. Ligand-gated anion channel that allows the movement of anions across cell membranes when activated by calcium (Ca2+). Transports a large specter of anions, namely mediates the movement of chloride, L-glutamate and iodide. Calcium-binding triggers the dilation of the aperture, but calcium-dependent gating is only effective when the size of the passing anion is bigger than the closed aperture. Mediates the calcium-activated hydrogencarbonate movement and participates in colonic hydrogencarbonate secretion concomitant with mucin secretion. In non-pigmented epithelium (NPE), mediates the efflux of intracellular L-glutamate; binding of intracellular L-glutamate activates and open both the neck and the aperture of the channel, leading to L-glutamate exit promoting chloride influx movement from the extracellular side in trans. Also exhibits a directional permeability for intracellular glutamine, in a similar manner as for L-glutamate. This is Bestrophin-2a from Homo sapiens (Human).